The sequence spans 376 residues: MELHLALRASPLPAADPGRRPPPPRGNFATNCTAAINSTHISQEKFRSLDSWVEHNMLTFLKPVEKCWQPQDFLPDPSHLSAEELGDAVREIHERAAEIPDEVWVCMVGNMVTEEALPTYQSLISSVLGGTVAGSTPWDRWIRGWSAEENRHGDLLNKYLYLTGRLDMRQVEKTIQYLIGSGMDVGVGNSILCGFIYTCFQEKATFIPHGNTARLAKHHGDTTLAKICGLVAADEKRHAAAYTNLMRKLFEVDPNESMLAFAHVMQARVTMPASRMFDGRDPHLFTHFSDVSQKIGVYTVGDYSEMLDFFLKEWDISAIVDGLSPEGRRVQEYVCGLPEVMRKLAERADDRRKKLVNVGEPRYIPFSWIFNKQVRV.

The transit peptide at 1–33 (MELHLALRASPLPAADPGRRPPPPRGNFATNCT) directs the protein to the chloroplast. Residues E114, E149, H152, E202, E235, and H238 each coordinate Fe cation.

It belongs to the fatty acid desaturase type 2 family. Homodimer. The cofactor is Fe(2+). As to expression, preferentially expressed in the flower labellum.

Its subcellular location is the plastid. It is found in the chloroplast stroma. It catalyses the reaction hexadecanoyl-[ACP] + 2 reduced [2Fe-2S]-[ferredoxin] + O2 + 2 H(+) = (4Z)-hexadecenoyl-[ACP] + 2 oxidized [2Fe-2S]-[ferredoxin] + 2 H2O. The catalysed reaction is octadecanoyl-[ACP] + 2 reduced [2Fe-2S]-[ferredoxin] + O2 + 2 H(+) = (9Z)-octadecenoyl-[ACP] + 2 oxidized [2Fe-2S]-[ferredoxin] + 2 H2O. It participates in lipid metabolism; fatty acid metabolism. Its function is as follows. Converts stearoyl-ACP to oleoyl-ACP by introduction of a cis double bond between carbons 9 and 10 of the acyl chain. Converts palmitoyl-ACP to (4Z)-hexadec-4-enoyl-ACP by introduction of a cis double bond between carbons 4 and 5 of the acyl chain. Catalyzes the desaturation of saturated fatty acid 18:0 and 16:0 to generate 18:1 (delta-9) and 16:1 (delta-4) intermediates, expected to give rise to 9-alkenes and 12-alkenes, respectively. This is Palmitoyl-[acyl-carrier-protein] 4-desaturase 2, chloroplastic (SAD2) from Ophrys arachnitiformis subsp. archipelagi (Orchid).